Here is a 187-residue protein sequence, read N- to C-terminus: Isopentenyl-diphosphate Delta-isomerase (187 aa).

Mn(2+)-binding residues include histidine 36, histidine 43, and histidine 80. One can recognise a Nudix hydrolase domain in the interval 41–178 (VRHRAFTALL…RQLRLCPWFE (138 aa)). Glutamate 98 contributes to the Mg(2+) binding site. Residues glutamate 127 and glutamate 129 each contribute to the Mn(2+) site. Residue glutamate 129 is part of the active site.

It belongs to the IPP isomerase type 1 family. Mg(2+) is required as a cofactor. It depends on Mn(2+) as a cofactor.

It localises to the cytoplasm. It catalyses the reaction isopentenyl diphosphate = dimethylallyl diphosphate. Its pathway is isoprenoid biosynthesis; dimethylallyl diphosphate biosynthesis; dimethylallyl diphosphate from isopentenyl diphosphate: step 1/1. In terms of biological role, catalyzes the 1,3-allylic rearrangement of the homoallylic substrate isopentenyl (IPP) to its highly electrophilic allylic isomer, dimethylallyl diphosphate (DMAPP). The protein is Isopentenyl-diphosphate Delta-isomerase of Haloarcula marismortui (strain ATCC 43049 / DSM 3752 / JCM 8966 / VKM B-1809) (Halobacterium marismortui).